Here is a 483-residue protein sequence, read N- to C-terminus: MKGLVIRISVALALLLWAVDMVFPWQQIIRSEANHYEAIQERGTLVVGTINNSVSYFIDPNGNPAGLEYDLSKSFADYLGVELEIKSLDNSDALFDALQNNKIDIAAANLLHQQRYQKQFQFGPAYTSASWQLVYRKGKDKPRSLTQLSAKDKLVITQSEELLNILSAQQKKQPTLSWQINSLLSQEALLLQVAEGKIDYTIANSIDVSAAQQIKPEIAVAFDITDEADVHWYLPSSSYSELQAALLDFMNGAIENGLIARIEEKYFSHIAQFDYVDIKSYTNAIEKILPKYTALFKKYQGELDWRLLAAVAYQESHWNEDATSPTGVRGIMMLTKATADRMKINDRTDAEQSIKAGSEYLHWLISQVPNSVPQEDKIWYALTAYNMGLGHMLDVRRLTKSLGGDPDNWLEVKKNLPLLAEKQYYSKLKYGYARGYEAFQYVENIRRYMNSIINYHRVRDDQISRPLEKVTDSIMITPQNSQD.

A signal peptide spans 1–18 (MKGLVIRISVALALLLWA). The segment at 19-270 (VDMVFPWQQI…RIEEKYFSHI (252 aa)) is non-LT domain. Residues 272–483 (QFDYVDIKSY…IMITPQNSQD (212 aa)) are LT domain. Residue Glu315 is part of the active site.

In the N-terminal section; belongs to the bacterial solute-binding protein 3 family. The protein in the C-terminal section; belongs to the transglycosylase Slt family.

Its subcellular location is the cell outer membrane. The enzyme catalyses Exolytic cleavage of the (1-&gt;4)-beta-glycosidic linkage between N-acetylmuramic acid (MurNAc) and N-acetylglucosamine (GlcNAc) residues in peptidoglycan, from either the reducing or the non-reducing ends of the peptidoglycan chains, with concomitant formation of a 1,6-anhydrobond in the MurNAc residue.. Murein-degrading enzyme that degrades murein glycan strands and insoluble, high-molecular weight murein sacculi, with the concomitant formation of a 1,6-anhydromuramoyl product. Lytic transglycosylases (LTs) play an integral role in the metabolism of the peptidoglycan (PG) sacculus. Their lytic action creates space within the PG sacculus to allow for its expansion as well as for the insertion of various structures such as secretion systems and flagella. The chain is Membrane-bound lytic murein transglycosylase F from Actinobacillus succinogenes (strain ATCC 55618 / DSM 22257 / CCUG 43843 / 130Z).